The following is a 163-amino-acid chain: Transcription antitermination protein NusB (163 aa).

It belongs to the NusB family.

Functionally, involved in transcription antitermination. Required for transcription of ribosomal RNA (rRNA) genes. Binds specifically to the boxA antiterminator sequence of the ribosomal RNA (rrn) operons. The sequence is that of Transcription antitermination protein NusB from Mycolicibacterium vanbaalenii (strain DSM 7251 / JCM 13017 / BCRC 16820 / KCTC 9966 / NRRL B-24157 / PYR-1) (Mycobacterium vanbaalenii).